The primary structure comprises 358 residues: NADH-quinone oxidoreductase subunit H (358 aa).

8 helical membrane-spanning segments follow: residues 20 to 40, 95 to 115, 128 to 148, 168 to 188, 206 to 226, 253 to 273, 290 to 310, and 334 to 354; these read ITVG…IPLI, ALFY…WAVI, IGLL…IIAG, ISYE…SGSM, VFSW…ISAV, GFAF…ISAL, WGFI…AVLY, and VLIP…ISPL.

It belongs to the complex I subunit 1 family. In terms of assembly, NDH-1 is composed of 14 different subunits. Subunits NuoA, H, J, K, L, M, N constitute the membrane sector of the complex.

The protein localises to the cell inner membrane. The catalysed reaction is a quinone + NADH + 5 H(+)(in) = a quinol + NAD(+) + 4 H(+)(out). In terms of biological role, NDH-1 shuttles electrons from NADH, via FMN and iron-sulfur (Fe-S) centers, to quinones in the respiratory chain. The immediate electron acceptor for the enzyme in this species is believed to be ubiquinone. Couples the redox reaction to proton translocation (for every two electrons transferred, four hydrogen ions are translocated across the cytoplasmic membrane), and thus conserves the redox energy in a proton gradient. This subunit may bind ubiquinone. The chain is NADH-quinone oxidoreductase subunit H from Neisseria meningitidis serogroup A / serotype 4A (strain DSM 15465 / Z2491).